A 312-amino-acid polypeptide reads, in one-letter code: Olfactory receptor 4F6 (312 aa).

Residues Met1–Leu25 lie on the Extracellular side of the membrane. N-linked (GlcNAc...) asparagine glycosylation is present at Asn5. Residues Leu26–Val49 traverse the membrane as a helical segment. Over Thr50–Ser57 the chain is Cytoplasmic. A helical transmembrane segment spans residues Pro58–Pro79. At Lys80–Gln100 the chain is on the extracellular side. An intrachain disulfide couples Cys97 to Cys189. The chain crosses the membrane as a helical span at residues Ile101 to Phe120. Topologically, residues Asp121–Gln139 are cytoplasmic. A helical membrane pass occupies residues Arg140 to Ile158. Residues Gln159–Leu195 lie on the Extracellular side of the membrane. The chain crosses the membrane as a helical span at residues Gly196 to Ile219. At Phe220 to Lys235 the chain is on the cytoplasmic side. The helical transmembrane segment at Ala236–Tyr258 threads the bilayer. Residues Ile259–Lys269 lie on the Extracellular side of the membrane. A helical membrane pass occupies residues Phe270 to Phe289. At Arg290 to Phe312 the chain is on the cytoplasmic side.

The protein belongs to the G-protein coupled receptor 1 family.

It localises to the cell membrane. Functionally, odorant receptor. This chain is Olfactory receptor 4F6 (OR4F6), found in Homo sapiens (Human).